We begin with the raw amino-acid sequence, 346 residues long: Heat-inducible transcription repressor HrcA (346 aa).

This sequence belongs to the HrcA family.

Its function is as follows. Negative regulator of class I heat shock genes (grpE-dnaK-dnaJ and groELS operons). Prevents heat-shock induction of these operons. This Erythrobacter litoralis (strain HTCC2594) protein is Heat-inducible transcription repressor HrcA.